The primary structure comprises 147 residues: Large ribosomal subunit protein uL13 (147 aa).

This sequence belongs to the universal ribosomal protein uL13 family. Part of the 50S ribosomal subunit.

In terms of biological role, this protein is one of the early assembly proteins of the 50S ribosomal subunit, although it is not seen to bind rRNA by itself. It is important during the early stages of 50S assembly. The sequence is that of Large ribosomal subunit protein uL13 from Lactobacillus acidophilus (strain ATCC 700396 / NCK56 / N2 / NCFM).